A 152-amino-acid chain; its full sequence is Large ribosomal subunit protein uL22 (152 aa).

The protein belongs to the universal ribosomal protein uL22 family. In terms of assembly, part of the 50S ribosomal subunit.

In terms of biological role, this protein binds specifically to 23S rRNA. It makes multiple contacts with different domains of the 23S rRNA in the assembled 50S subunit and ribosome. The globular domain of the protein is located near the polypeptide exit tunnel on the outside of the subunit, while an extended beta-hairpin is found that lines the wall of the exit tunnel in the center of the 70S ribosome. The protein is Large ribosomal subunit protein uL22 of Cenarchaeum symbiosum (strain A).